The chain runs to 64 residues: Large ribosomal subunit protein uL29 (64 aa).

Belongs to the universal ribosomal protein uL29 family.

This Burkholderia mallei (strain NCTC 10247) protein is Large ribosomal subunit protein uL29.